A 383-amino-acid chain; its full sequence is uncharacterized protein (383 aa).

This sequence belongs to the peptidase M20 family.

This is an uncharacterized protein from Staphylococcus haemolyticus (strain JCSC1435).